We begin with the raw amino-acid sequence, 386 residues long: Palmitoyltransferase ZDHHC18 (386 aa).

Positions 1–65 are disordered; that stretch reads MKDCEYQQIS…GSGSLGRRPR (65 aa). Over 1-88 the chain is Cytoplasmic; it reads MKDCEYQQIS…CGGRLMLAGH (88 aa). Residue serine 19 is modified to Phosphoserine. The segment covering 27 to 40 has biased composition (pro residues); the sequence is PAAPPGPSPGPAPG. Positions 49 to 59 are enriched in gly residues; sequence SGSGSGSGSGS. A helical membrane pass occupies residues 89–109; it reads GGVFALTLLLILSTTILFFIF. Residues 110-117 are Lumenal-facing; that stretch reads DCPYLART. Residues 118-138 traverse the membrane as a helical segment; the sequence is LTLAIPIIAAILFFFVMSCLL. The Cytoplasmic segment spans residues 139-233; sequence QTSFTDPGIL…GNCVGRRNYR (95 aa). One can recognise a DHHC domain in the interval 190–240; the sequence is KYCFTCKMFRPPRTSHCSVCDNCVERFDHHCPWVGNCVGRRNYRFFYAFIL. The active-site S-palmitoyl cysteine intermediate is cysteine 220. Residues 234 to 254 traverse the membrane as a helical segment; sequence FFYAFILSLSFLTAFIFACVV. At 255–275 the chain is on the lumenal side; the sequence is THLTLLSQGSNFLSALNKTPA. A helical transmembrane segment spans residues 276–296; that stretch reads GVLELVICFFSIWSILGLSGF. Residues 297–386 are Cytoplasmic-facing; that stretch reads HTYLVASNLT…PDASMVGGHP (90 aa). Positions 362-386 are disordered; that stretch reads LPSPIRSDEPACGAKPDASMVGGHP.

Belongs to the DHHC palmitoyltransferase family. ERF2/ZDHHC9 subfamily.

It is found in the golgi apparatus membrane. The catalysed reaction is L-cysteinyl-[protein] + hexadecanoyl-CoA = S-hexadecanoyl-L-cysteinyl-[protein] + CoA. Functionally, palmitoyltransferase that catalyzes the addition of palmitate onto various protein substrates, such as CGAS, HRAS and LCK. Acts as a negative regulator of the cGAS-STING pathway be mediating palmitoylation and inactivation of CGAS. May also have a palmitoyltransferase activity toward the beta-2 adrenergic receptor/ADRB2 and therefore regulate G protein-coupled receptor signaling. The protein is Palmitoyltransferase ZDHHC18 of Rattus norvegicus (Rat).